A 465-amino-acid chain; its full sequence is Cysteine--tRNA ligase (465 aa).

Cysteine 30 contacts Zn(2+). The 'HIGH' region signature appears at 32–42 (ITVYDYCHIGH). Residues cysteine 214, histidine 239, and glutamate 243 each contribute to the Zn(2+) site. Residues 271-275 (KMSKS) carry the 'KMSKS' region motif. Residue lysine 274 coordinates ATP.

It belongs to the class-I aminoacyl-tRNA synthetase family. In terms of assembly, monomer. Requires Zn(2+) as cofactor.

Its subcellular location is the cytoplasm. It catalyses the reaction tRNA(Cys) + L-cysteine + ATP = L-cysteinyl-tRNA(Cys) + AMP + diphosphate. This chain is Cysteine--tRNA ligase, found in Burkholderia thailandensis (strain ATCC 700388 / DSM 13276 / CCUG 48851 / CIP 106301 / E264).